The chain runs to 252 residues: Phosphate import ATP-binding protein PstB 1 (252 aa).

Residues 6-247 (LQIRDLSVYY…PKRKETEDYI (242 aa)) form the ABC transporter domain. Residue 38-45 (GPSGSGKS) participates in ATP binding.

Belongs to the ABC transporter superfamily. Phosphate importer (TC 3.A.1.7) family. In terms of assembly, the complex is composed of two ATP-binding proteins (PstB), two transmembrane proteins (PstC and PstA) and a solute-binding protein (PstS).

The protein localises to the cell membrane. The enzyme catalyses phosphate(out) + ATP + H2O = ADP + 2 phosphate(in) + H(+). In terms of biological role, part of the ABC transporter complex PstSACB involved in phosphate import. Responsible for energy coupling to the transport system. This Streptococcus pyogenes serotype M1 protein is Phosphate import ATP-binding protein PstB 1.